A 182-amino-acid chain; its full sequence is Flavodoxin (182 aa).

In terms of domain architecture, Flavodoxin-like spans 4-173; sequence IGLFFGSDTG…RLKGWLSLIA (170 aa).

This sequence belongs to the flavodoxin family. FMN serves as cofactor.

Low-potential electron donor to a number of redox enzymes. NifF is the electron donor to nitrogenase. This Rhodobacter capsulatus (strain ATCC BAA-309 / NBRC 16581 / SB1003) protein is Flavodoxin (nifF).